A 448-amino-acid chain; its full sequence is MLDYMDYVQRQFEKSTDWNYDNSYANILASSRNILDFPVPNQFKFQLSNNSTPHTFNTMEVFSRKIFNGSMTYLYTDAENMDKLVHDSNSISLQDVTDTYRYVQPYYTHKPSSNGDNHVRSLYYGKMSYPSPNLEAMLIKRLNESTQLTLQCVSSFNGFNILTGYWQHDTGRNRHEVIMSTNDLLCGYRYLHNFLGTPSKLKTSLYNNFSLSLGGEVWLGIVTLSPGCSTTLRYCTHSPTTGRPQTLTLTWNPLFGHISSTYTAKTSSSSTFSTKYDFNLYSIESNLSFGCEFWRRGYQESSPQLQEQINGHASEPKDRIMYYHMMAPDSRNSISPRANSPQERQLLEDLTIAFSSSLKKIDKEKSMIEQFENRINQSNFTSVWKLSTSSKDKNLRLLWEGKFKGFLLSAGTEFCKTNPRNEINEVPSTENKLTFYPNKFGIQLQYST.

This sequence belongs to the MDM10 family. In terms of assembly, component of the ER-mitochondria encounter structure (ERMES) or MDM complex, composed of MMM1, MDM10, MDM12 and MDM34. Associates with the mitochondrial outer membrane sorting assembly machinery SAM(core) complex.

The protein localises to the mitochondrion outer membrane. Component of the ERMES/MDM complex, which serves as a molecular tether to connect the endoplasmic reticulum and mitochondria. Components of this complex are involved in the control of mitochondrial shape and protein biogenesis and may function in phospholipid exchange. MDM10 is involved in the late assembly steps of the general translocase of the mitochondrial outer membrane (TOM complex). Functions in the TOM40-specific route of the assembly of outer membrane beta-barrel proteins, including the association of TOM40 with the receptor TOM22 and small TOM proteins. Can associate with the SAM(core) complex as well as the MDM12-MMM1 complex, both involved in late steps of the major beta-barrel assembly pathway, that is responsible for biogenesis of all outer membrane beta-barrel proteins. May act as a switch that shuttles between both complexes and channels precursor proteins into the TOM40-specific pathway. Plays a role in mitochondrial morphology and in the inheritance of mitochondria. In Zygosaccharomyces rouxii (strain ATCC 2623 / CBS 732 / NBRC 1130 / NCYC 568 / NRRL Y-229), this protein is Mitochondrial distribution and morphology protein 10.